The primary structure comprises 382 residues: Galactokinase (382 aa).

34–37 contributes to the substrate binding site; that stretch reads EHTD. 124 to 130 lines the ATP pocket; that stretch reads GAGLSSS. 2 residues coordinate Mg(2+): serine 130 and glutamate 162. Aspartate 174 serves as the catalytic Proton acceptor. Residue tyrosine 223 coordinates substrate.

Belongs to the GHMP kinase family. GalK subfamily.

Its subcellular location is the cytoplasm. The enzyme catalyses alpha-D-galactose + ATP = alpha-D-galactose 1-phosphate + ADP + H(+). Its pathway is carbohydrate metabolism; galactose metabolism. Catalyzes the transfer of the gamma-phosphate of ATP to D-galactose to form alpha-D-galactose-1-phosphate (Gal-1-P). This chain is Galactokinase, found in Salmonella paratyphi C (strain RKS4594).